The primary structure comprises 319 residues: Beta-ketoacyl-[acyl-carrier-protein] synthase III (319 aa).

Catalysis depends on residues Cys113 and His246. Residues 247–251 (QANIR) form an ACP-binding region. Asn276 is an active-site residue.

Belongs to the thiolase-like superfamily. FabH family. In terms of assembly, homodimer.

Its subcellular location is the cytoplasm. The enzyme catalyses malonyl-[ACP] + acetyl-CoA + H(+) = 3-oxobutanoyl-[ACP] + CO2 + CoA. It participates in lipid metabolism; fatty acid biosynthesis. In terms of biological role, catalyzes the condensation reaction of fatty acid synthesis by the addition to an acyl acceptor of two carbons from malonyl-ACP. Catalyzes the first condensation reaction which initiates fatty acid synthesis and may therefore play a role in governing the total rate of fatty acid production. Possesses both acetoacetyl-ACP synthase and acetyl transacylase activities. Its substrate specificity determines the biosynthesis of branched-chain and/or straight-chain of fatty acids. This is Beta-ketoacyl-[acyl-carrier-protein] synthase III from Ehrlichia canis (strain Jake).